Reading from the N-terminus, the 102-residue chain is Large ribosomal subunit protein uL24 (102 aa).

Belongs to the universal ribosomal protein uL24 family. Part of the 50S ribosomal subunit.

In terms of biological role, one of two assembly initiator proteins, it binds directly to the 5'-end of the 23S rRNA, where it nucleates assembly of the 50S subunit. Its function is as follows. One of the proteins that surrounds the polypeptide exit tunnel on the outside of the subunit. The sequence is that of Large ribosomal subunit protein uL24 from Allorhizobium ampelinum (strain ATCC BAA-846 / DSM 112012 / S4) (Agrobacterium vitis (strain S4)).